Consider the following 270-residue polypeptide: Transmembrane protein 176B (270 aa).

4 helical membrane passes run 65–85 (LALG…GVCL), 95–115 (ASGC…GAIV), 127–147 (ISSL…VLCV), and 209–229 (LFLA…GVGL). 4 positions are modified to phosphoserine: Ser236, Ser245, Ser254, and Ser258. Residues 237-270 (SQPLNEEGSEKRLLGENSVPPSPSREQTSTAIVL) form a disordered region. Positions 260 to 270 (SREQTSTAIVL) are enriched in polar residues.

This sequence belongs to the TMEM176 family. As to expression, expressed in lung and dermal fibroblasts.

The protein resides in the nucleus membrane. In terms of biological role, may play a role in the process of maturation of dendritic cells. Required for the development of cerebellar granule cells. The polypeptide is Transmembrane protein 176B (TMEM176B) (Homo sapiens (Human)).